The following is a 45-amino-acid chain: Photosystem II reaction center protein K (45 aa).

A propeptide spanning residues 1–8 (MELMLLFA) is cleaved from the precursor. The chain crosses the membrane as a helical span at residues 24 to 44 (LPVIPVLFLALAFVWQASVGF).

Belongs to the PsbK family. As to quaternary structure, PSII is composed of 1 copy each of membrane proteins PsbA, PsbB, PsbC, PsbD, PsbE, PsbF, PsbH, PsbI, PsbJ, PsbK, PsbL, PsbM, PsbT, PsbX, PsbY, PsbZ, Psb30/Ycf12, peripheral proteins PsbO, CyanoQ (PsbQ), PsbU, PsbV and a large number of cofactors. It forms dimeric complexes.

It localises to the cellular thylakoid membrane. In terms of biological role, one of the components of the core complex of photosystem II (PSII). PSII is a light-driven water:plastoquinone oxidoreductase that uses light energy to abstract electrons from H(2)O, generating O(2) and a proton gradient subsequently used for ATP formation. It consists of a core antenna complex that captures photons, and an electron transfer chain that converts photonic excitation into a charge separation. This chain is Photosystem II reaction center protein K, found in Cyanothece sp. (strain PCC 7425 / ATCC 29141).